Here is a 198-residue protein sequence, read N- to C-terminus: Probable thymidylate kinase (198 aa).

Position 7-14 (7-14) interacts with ATP; the sequence is GIDGAGKS.

It belongs to the thymidylate kinase family.

It catalyses the reaction dTMP + ATP = dTDP + ADP. The chain is Probable thymidylate kinase from Methanocorpusculum labreanum (strain ATCC 43576 / DSM 4855 / Z).